We begin with the raw amino-acid sequence, 199 residues long: Ras-related and estrogen-regulated growth inhibitor (199 aa).

Residues 13-20 (GRAGVGKS), 60-64 (DTAGQ), and 118-121 (NKAD) each bind GTP.

Belongs to the small GTPase superfamily. Ras family. Detected in heart, brain, placenta, lung, liver, skin, kidney and pancreas. Detected in estrogen receptor-positive breast-derived cell lines, but not in estrogen receptor-negative cell lines. Expression is decreased or lost in a significant proportion of primary breast tumors with poor clinical prognosis.

The protein resides in the cytoplasm. The enzyme catalyses GTP + H2O = GDP + phosphate + H(+). Binds GDP/GTP and possesses intrinsic GTPase activity. Has higher affinity for GDP than for GTP. In cell lines overexpression leads to a reduction in the rate of proliferation, colony formation and in tumorigenic potential. The sequence is that of Ras-related and estrogen-regulated growth inhibitor (RERG) from Homo sapiens (Human).